The sequence spans 103 residues: uncharacterized protein (103 aa).

The chain crosses the membrane as a helical span at residues 38–58 (FTTLITIYVAAFYTGVIGAAV).

Its subcellular location is the membrane. This is an uncharacterized protein from Arabidopsis thaliana (Mouse-ear cress).